The primary structure comprises 500 residues: L-arabinose isomerase (500 aa).

The Mn(2+) site is built by Glu306, Glu333, His350, and His450.

It belongs to the arabinose isomerase family. Homohexamer. Requires Mn(2+) as cofactor.

The enzyme catalyses beta-L-arabinopyranose = L-ribulose. It functions in the pathway carbohydrate degradation; L-arabinose degradation via L-ribulose; D-xylulose 5-phosphate from L-arabinose (bacterial route): step 1/3. Functionally, catalyzes the conversion of L-arabinose to L-ribulose. The polypeptide is L-arabinose isomerase (Yersinia pestis bv. Antiqua (strain Nepal516)).